Reading from the N-terminus, the 273-residue chain is 3-methyl-2-oxobutanoate hydroxymethyltransferase (273 aa).

Aspartate 53 and aspartate 92 together coordinate Mg(2+). 3-methyl-2-oxobutanoate-binding positions include 53-54, aspartate 92, and lysine 122; that span reads DS. Position 124 (glutamate 124) interacts with Mg(2+). Glutamate 191 (proton acceptor) is an active-site residue.

The protein belongs to the PanB family. Homodecamer; pentamer of dimers. Requires Mg(2+) as cofactor.

Its subcellular location is the cytoplasm. The catalysed reaction is 3-methyl-2-oxobutanoate + (6R)-5,10-methylene-5,6,7,8-tetrahydrofolate + H2O = 2-dehydropantoate + (6S)-5,6,7,8-tetrahydrofolate. It functions in the pathway cofactor biosynthesis; (R)-pantothenate biosynthesis; (R)-pantoate from 3-methyl-2-oxobutanoate: step 1/2. In terms of biological role, catalyzes the reversible reaction in which hydroxymethyl group from 5,10-methylenetetrahydrofolate is transferred onto alpha-ketoisovalerate to form ketopantoate. The sequence is that of 3-methyl-2-oxobutanoate hydroxymethyltransferase from Porphyromonas gingivalis (strain ATCC 33277 / DSM 20709 / CIP 103683 / JCM 12257 / NCTC 11834 / 2561).